The primary structure comprises 156 residues: Small ribosomal subunit protein uS7 (156 aa).

It belongs to the universal ribosomal protein uS7 family. As to quaternary structure, part of the 30S ribosomal subunit. Contacts proteins S9 and S11.

Its function is as follows. One of the primary rRNA binding proteins, it binds directly to 16S rRNA where it nucleates assembly of the head domain of the 30S subunit. Is located at the subunit interface close to the decoding center, probably blocks exit of the E-site tRNA. This chain is Small ribosomal subunit protein uS7, found in Geobacter sp. (strain M21).